A 127-amino-acid polypeptide reads, in one-letter code: Vacuolar ATPase assembly integral membrane protein VMA21 (127 aa).

Residues 1–28 form a disordered region; the sequence is MATRRNPTKESITTSPPPDQQPRQPGEL. At 1-45 the chain is on the cytoplasmic side; that stretch reads MATRRNPTKESITTSPPPDQQPRQPGELEHREAIQLRDLPGYPQQ. A helical transmembrane segment spans residues 46-66; that stretch reads VLWKLIIYSIAVLVLPLSAYF. Residues 67-79 are Lumenal-facing; sequence YSVNYVFDGNTTY. The helical transmembrane segment at 80–100 threads the bilayer; it reads AGATAAITANLILFSYIVVAM. Residues 101 to 127 lie on the Cytoplasmic side of the membrane; sequence REDKGDQEQLREQQQLRGNKEETKKMK. A disordered region spans residues 107 to 127; that stretch reads QEQLREQQQLRGNKEETKKMK. Residues 118–127 show a composition bias toward basic and acidic residues; that stretch reads GNKEETKKMK. The short motif at 124–127 is the Prevents secretion from ER element; the sequence is KKMK.

Belongs to the VMA21 family.

The protein localises to the endoplasmic reticulum membrane. The protein resides in the endoplasmic reticulum-Golgi intermediate compartment membrane. It is found in the cytoplasmic vesicle. Its subcellular location is the COPII-coated vesicle membrane. Functionally, required for the assembly of the V0 complex of the vacuolar ATPase (V-ATPase) in the endoplasmic reticulum. This chain is Vacuolar ATPase assembly integral membrane protein VMA21, found in Coccidioides immitis (strain RS) (Valley fever fungus).